The following is a 274-amino-acid chain: Large ribosomal subunit protein uL2 (274 aa).

2 disordered regions span residues 28–54 (APHA…TRHI) and 224–274 (VAMN…RRRK). Residues 263–274 (KRTDKMIVRRRK) are compositionally biased toward basic and acidic residues.

It belongs to the universal ribosomal protein uL2 family. In terms of assembly, part of the 50S ribosomal subunit. Forms a bridge to the 30S subunit in the 70S ribosome.

Functionally, one of the primary rRNA binding proteins. Required for association of the 30S and 50S subunits to form the 70S ribosome, for tRNA binding and peptide bond formation. It has been suggested to have peptidyltransferase activity; this is somewhat controversial. Makes several contacts with the 16S rRNA in the 70S ribosome. This chain is Large ribosomal subunit protein uL2, found in Pseudomonas savastanoi pv. phaseolicola (strain 1448A / Race 6) (Pseudomonas syringae pv. phaseolicola (strain 1448A / Race 6)).